Consider the following 118-residue polypeptide: Non-specific lipid-transfer protein A (118 aa).

The signal sequence occupies residues 1–25 (MAGVMKLACLVLACMIVAGPITANR). Cystine bridges form between cysteine 29–cysteine 76, cysteine 39–cysteine 53, cysteine 54–cysteine 100, and cysteine 74–cysteine 114.

The protein belongs to the plant LTP family.

In terms of biological role, plant non-specific lipid-transfer proteins transfer phospholipids as well as galactolipids across membranes. May play a role in wax or cutin deposition in the cell walls of expanding epidermal cells and certain secretory tissues. The polypeptide is Non-specific lipid-transfer protein A (WAX9A) (Brassica oleracea var. italica (Broccoli)).